Consider the following 1062-residue polypeptide: Integrin alpha-8 (1062 aa).

An N-terminal signal peptide occupies residues 1–35 (MSAGTHCGPPGNRAPPFARLCCVSAALGMLWSPAC). Residues 36–1010 (LAFNLDVDKL…ATPNVSFSIP (975 aa)) lie on the Extracellular side of the membrane. FG-GAP repeat units lie at residues 41 to 104 (DVDK…RSAQ), 121 to 182 (NGTK…AYAE), 187 to 239 (RNSN…IANY), 252 to 305 (KQTD…STDM), 306 to 371 (TFIQ…LLFQ), 372 to 430 (DPQV…GLHS), and 434 to 497 (QVLQ…LHPM). Asn80 is a glycosylation site (N-linked (GlcNAc...) asparagine). Cys95 and Cys105 are disulfide-bonded. N-linked (GlcNAc...) asparagine glycosylation is present at Asn121. Cysteines 149 and 170 form a disulfide. Asn176 is a glycosylation site (N-linked (GlcNAc...) asparagine). A disulfide bridge connects residues Cys186 and Cys199. The N-linked (GlcNAc...) asparagine glycan is linked to Asn238. The Ca(2+) site is built by Glu274, Thr276, Asp278, and Glu282. N-linked (GlcNAc...) asparagine glycosylation is found at Asn301 and Asn310. The Ca(2+) site is built by Asp328, Asn330, Asp332, Asp336, Asp394, Asn396, Asp398, Tyr400, and Asp402. The Cell attachment site signature appears at 454-456 (RGD). 5 residues coordinate Ca(2+): Asp458, Asp460, Asn462, Tyr464, and Asp466. N-linked (GlcNAc...) asparagine glycosylation occurs at Asn503. 2 disulfides stabilise this stretch: Cys506-Cys517 and Cys523-Cys579. 2 N-linked (GlcNAc...) asparagine glycosylation sites follow: Asn600 and Asn604. 2 cysteine pairs are disulfide-bonded: Cys640/Cys646 and Cys712/Cys725. 6 N-linked (GlcNAc...) asparagine glycosylation sites follow: Asn718, Asn736, Asn752, Asn779, Asn895, and Asn922. Disulfide bonds link Cys866/Cys923 and Cys928/Cys933. Residue Asn1004 is glycosylated (N-linked (GlcNAc...) asparagine). A helical transmembrane segment spans residues 1011–1031 (LWVIILAILLGLLVLAILTLA). Over 1032–1062 (LWKCGFFDRARPPQDEMTDREQLTSDKTPEA) the chain is Cytoplasmic.

It belongs to the integrin alpha chain family. In terms of assembly, heterodimer of an alpha and a beta subunit. The alpha subunit is composed of a heavy and a light chain linked by a disulfide bond. Alpha-8 associates with beta-1. In terms of tissue distribution, in brain, expressed in deep cortex, hippocampal CA1, basolateral amygdala and striatum. In kidney, expressed in glomerular mesengium (at protein level).

The protein localises to the membrane. It is found in the cell membrane. Integrin alpha-8/beta-1 functions in the genesis of kidney and probably of other organs by regulating the recruitment of mesenchymal cells into epithelial structures. It recognizes the sequence R-G-D in a wide array of ligands including TNC, FN1, SPP1 TGFB1, TGFB3 and VTN. NPNT is probably its functional ligand in kidney genesis. Neuronal receptor for TNC it mediates cell-cell interactions and regulates neurite outgrowth of sensory and motor neurons. The protein is Integrin alpha-8 (Itga8) of Mus musculus (Mouse).